An 874-amino-acid polypeptide reads, in one-letter code: Alanine--tRNA ligase (874 aa).

Zn(2+) contacts are provided by H562, H566, C665, and H669.

This sequence belongs to the class-II aminoacyl-tRNA synthetase family. Zn(2+) serves as cofactor.

The protein localises to the cytoplasm. The catalysed reaction is tRNA(Ala) + L-alanine + ATP = L-alanyl-tRNA(Ala) + AMP + diphosphate. In terms of biological role, catalyzes the attachment of alanine to tRNA(Ala) in a two-step reaction: alanine is first activated by ATP to form Ala-AMP and then transferred to the acceptor end of tRNA(Ala). Also edits incorrectly charged Ser-tRNA(Ala) and Gly-tRNA(Ala) via its editing domain. The sequence is that of Alanine--tRNA ligase from Pseudomonas fluorescens (strain ATCC BAA-477 / NRRL B-23932 / Pf-5).